Here is a 168-residue protein sequence, read N- to C-terminus: RxLR effector protein PITG_12737 (168 aa).

Residues 1–20 (MRACAILVVAAAAVLTGSTA) form the signal peptide. The RxLR-dEER signature appears at 54–77 (RRLRKHKTVNTNSEMEYESEAEAR).

It belongs to the RxLR effector family.

The protein resides in the secreted. It localises to the host nucleus. The protein localises to the host cytoplasm. Functionally, effector that enhances P.infestans colonization of Nicotiana benthamiana leaves. The chain is RxLR effector protein PITG_12737 from Phytophthora infestans (strain T30-4) (Potato late blight agent).